The chain runs to 194 residues: Crossover junction endodeoxyribonuclease RuvC (194 aa).

Residues Asp-8, Glu-72, and Asp-144 contribute to the active site. Mg(2+) is bound by residues Asp-8, Glu-72, and Asp-144.

The protein belongs to the RuvC family. In terms of assembly, homodimer which binds Holliday junction (HJ) DNA. The HJ becomes 2-fold symmetrical on binding to RuvC with unstacked arms; it has a different conformation from HJ DNA in complex with RuvA. In the full resolvosome a probable DNA-RuvA(4)-RuvB(12)-RuvC(2) complex forms which resolves the HJ. The cofactor is Mg(2+).

The protein localises to the cytoplasm. It carries out the reaction Endonucleolytic cleavage at a junction such as a reciprocal single-stranded crossover between two homologous DNA duplexes (Holliday junction).. Its function is as follows. The RuvA-RuvB-RuvC complex processes Holliday junction (HJ) DNA during genetic recombination and DNA repair. Endonuclease that resolves HJ intermediates. Cleaves cruciform DNA by making single-stranded nicks across the HJ at symmetrical positions within the homologous arms, yielding a 5'-phosphate and a 3'-hydroxyl group; requires a central core of homology in the junction. The consensus cleavage sequence is 5'-(A/T)TT(C/G)-3'. Cleavage occurs on the 3'-side of the TT dinucleotide at the point of strand exchange. HJ branch migration catalyzed by RuvA-RuvB allows RuvC to scan DNA until it finds its consensus sequence, where it cleaves and resolves the cruciform DNA. In Psychrobacter cryohalolentis (strain ATCC BAA-1226 / DSM 17306 / VKM B-2378 / K5), this protein is Crossover junction endodeoxyribonuclease RuvC.